A 1163-amino-acid chain; its full sequence is Putative beta-glucuronidase (1163 aa).

The N-terminal stretch at M1–G20 is a signal peptide.

Belongs to the glycosyl hydrolase 2 family.

The protein localises to the periplasm. The catalysed reaction is a beta-D-glucuronoside + H2O = D-glucuronate + an alcohol. In terms of biological role, glycoside hydrolase involved in ulvan degradation. Ulvan is the main polysaccharide component of the Ulvales (green seaweed) cell wall. It is composed of disaccharide building blocks comprising 3-sulfated rhamnose (Rha3S) linked to D-glucuronic acid (GlcA), L-iduronic acid (IduA), or D-xylose (Xyl). The protein is Putative beta-glucuronidase of Formosa agariphila (strain DSM 15362 / KCTC 12365 / LMG 23005 / KMM 3901 / M-2Alg 35-1).